A 247-amino-acid polypeptide reads, in one-letter code: Cytochrome c oxidase subunit 2 (247 aa).

Residues 12–38 (DVPTPWGLYFQDSSTPNQEGIIELHDN) lie on the Mitochondrial intermembrane side of the membrane. The helical transmembrane segment at 39 to 59 (IMFYLVLILCTVSWLLFSIVK) threads the bilayer. Over 60-78 (DSSKNPLPHKYLVHGQTIE) the chain is Mitochondrial matrix. Residues 79–101 (IIWTILPAVVLLIIAFPSFILLY) traverse the membrane as a helical segment. Topologically, residues 102-247 (LCDEVISPAM…KEFLTWLNEQ (146 aa)) are mitochondrial intermembrane. Residues His182, Cys217, Glu219, Cys221, His225, and Met228 each contribute to the Cu cation site. Residue Glu219 coordinates Mg(2+).

Belongs to the cytochrome c oxidase subunit 2 family. In terms of assembly, component of the cytochrome c oxidase (complex IV, CIV), a multisubunit enzyme composed of a catalytic core of 3 subunits and several supernumerary subunits. The complex exists as a monomer or a dimer and forms supercomplexes (SCs) in the inner mitochondrial membrane with ubiquinol-cytochrome c oxidoreductase (cytochrome b-c1 complex, complex III, CIII). Cu cation serves as cofactor. Post-translationally, the signal sequence of COX2 is processed by IMP1.

The protein localises to the mitochondrion inner membrane. The enzyme catalyses 4 Fe(II)-[cytochrome c] + O2 + 8 H(+)(in) = 4 Fe(III)-[cytochrome c] + 2 H2O + 4 H(+)(out). Component of the cytochrome c oxidase, the last enzyme in the mitochondrial electron transport chain which drives oxidative phosphorylation. The respiratory chain contains 3 multisubunit complexes succinate dehydrogenase (complex II, CII), ubiquinol-cytochrome c oxidoreductase (cytochrome b-c1 complex, complex III, CIII) and cytochrome c oxidase (complex IV, CIV), that cooperate to transfer electrons derived from NADH and succinate to molecular oxygen, creating an electrochemical gradient over the inner membrane that drives transmembrane transport and the ATP synthase. Cytochrome c oxidase is the component of the respiratory chain that catalyzes the reduction of oxygen to water. Electrons originating from reduced cytochrome c in the intermembrane space (IMS) are transferred via the dinuclear copper A center (CU(A)) of subunit 2 and heme A of subunit 1 to the active site in subunit 1, a binuclear center (BNC) formed by heme A3 and copper B (CU(B)). The BNC reduces molecular oxygen to 2 water molecules using 4 electrons from cytochrome c in the IMS and 4 protons from the mitochondrial matrix. This chain is Cytochrome c oxidase subunit 2 (COX2), found in Cyberlindnera mrakii (Yeast).